The following is a 1022-amino-acid chain: rDNA transcriptional regulator POL5 (1022 aa).

3 stretches are compositionally biased toward acidic residues: residues 706 to 719 (EEFE…DASE), 728 to 748 (SESE…EDEA), and 781 to 802 (DLDQ…ESMD). Disordered stretches follow at residues 706-748 (EEFE…EDEA) and 778-805 (GEVD…DDEK). S789 is modified (phosphoserine).

It belongs to the MYBBP1A family. As to quaternary structure, interacts with FRK1.

It localises to the nucleus. Its subcellular location is the nucleolus. The catalysed reaction is DNA(n) + a 2'-deoxyribonucleoside 5'-triphosphate = DNA(n+1) + diphosphate. Its activity is regulated as follows. Stimulated by PCNA and inhibited by aphidicolin. Its function is as follows. Plays an important role in the regulation of rRNA transcription. Binds near or at the enhancer region of rRNA repeating units. May have DNA polymerase activity, but it is not required for in vivo function. In Saccharomyces cerevisiae (strain ATCC 204508 / S288c) (Baker's yeast), this protein is rDNA transcriptional regulator POL5.